A 312-amino-acid polypeptide reads, in one-letter code: Olfactory receptor 4F3/4F16/4F29 (312 aa).

Topologically, residues 1-25 (MDGENHSVVSEFLFLGLTHSWEIQL) are extracellular. N-linked (GlcNAc...) asparagine glycosylation occurs at Asn-5. A helical transmembrane segment spans residues 26–49 (LLLVFSSVLYVASITGNILIVFSV). The Cytoplasmic segment spans residues 50 to 57 (TTDPHLHS). A helical transmembrane segment spans residues 58 to 79 (PMYFLLASLSFIDLGACSVTSP). Residues 80–100 (KMIYDLFRKRKVISFGGCIAQ) are Extracellular-facing. Cys-97 and Cys-189 are joined by a disulfide. Residues 101–120 (IFFIHVVGGVEMVLLIAMAF) form a helical membrane-spanning segment. The Cytoplasmic segment spans residues 121–139 (DRYVALCKPLHYLTIMSPR). Residues 140 to 158 (MCLSFLAVAWTLGVSHSLF) traverse the membrane as a helical segment. The Extracellular segment spans residues 159-195 (QLAFLVNLAFCGPNVLDSFYCDLPRLLRLACTDTYRL). The chain crosses the membrane as a helical span at residues 196 to 219 (QFMVTVNSGFICVGTFFILLISYV). Topologically, residues 220 to 235 (FILFTVWKHSSGGSSK) are cytoplasmic. The helical transmembrane segment at 236 to 258 (ALSTLSAHSTVVLLFFGPPMFVY) threads the bilayer. At 259–269 (TRPHPNSQMDK) the chain is on the extracellular side. The chain crosses the membrane as a helical span at residues 270-289 (FLAIFDAVLTPFLNPVVYTF). Topologically, residues 290–312 (RNKEMKAAIKRVCKQLVIYKRIS) are cytoplasmic.

It belongs to the G-protein coupled receptor 1 family.

The protein resides in the cell membrane. Its function is as follows. Odorant receptor. This Homo sapiens (Human) protein is Olfactory receptor 4F3/4F16/4F29 (OR4F3).